A 429-amino-acid chain; its full sequence is Chordin-like protein 2 (429 aa).

Positions 1-25 (MVPEVRVLSSLLGLALLWFPLDSHA) are cleaved as a signal peptide. 2 consecutive VWFC domains span residues 31 to 96 (MFCL…PKCV) and 109 to 175 (KSCQ…QACK). The N-linked (GlcNAc...) asparagine glycan is linked to N114. S182 is modified (phosphoserine; by FAM20C). The disordered stretch occupies residues 182–224 (SDEEDSVQSLHGVRHPQDPCSSDAGRKRGPGTPAPTGLSAPLS). Positions 250-315 (KACVHGGKTY…VAGKCCKICP (66 aa)) constitute a VWFC 3 domain.

Interacts with GDF5. May interact with BMP2, BMP4, BMP5, BMP6, BMP7 and INHBA. Phosphorylated by FAM20C in the extracellular medium. As to expression, highly expressed in uterus. Moderately expressed in heart, liver, prostate, testis and ovary. Weakly expressed in skeletal muscle, kidney, spleen, small intestine and colon. Expressed in the secretory epithelial cells of uterine endometrium, fallopian tubes, endocervical glands, bladder and prostate, as well as the transitional epithelium of the urinary bladder, and in bone osteoblasts (at protein level). In normal cartilage, expression was confined in a few chondrocytes in the superficial zone as well as in the middle zone. In diseased cartilage coming from osteoarthritic patients, expression was limited to the middle zone of chondrocytes. Isoform 1 and isoform 2 are expressed in fetal cerebellum and heart, while only isoform 2 is detected in fetal spleen. Isoform 2 present in plasma.

It localises to the secreted. The protein resides in the cytoplasm. Its function is as follows. May inhibit BMPs activity by blocking their interaction with their receptors. Has a negative regulator effect on the cartilage formation/regeneration from immature mesenchymal cells, by preventing or reducing the rate of matrix accumulation. Implicated in tumor angiogenesis. May play a role during myoblast and osteoblast differentiation, and maturation. This is Chordin-like protein 2 (CHRDL2) from Homo sapiens (Human).